The primary structure comprises 450 residues: Cysteine proteinase (450 aa).

The first 20 residues, 1-20 (MPRTEMVRFVRLPVVLLAMA), serve as a signal peptide directing secretion. A propeptide spans 21–125 (ACLASVALGS…RKTVNVTTGR (105 aa)) (activation peptide). The N-linked (GlcNAc...) asparagine glycan is linked to Asn-120. Cys-147 and Cys-188 are joined by a disulfide. Residues Cys-150, His-287, and Asn-307 contribute to the active site. Residues 343 to 450 (TPPPPPPPPP…TKAARLVPHQ (108 aa)) form a 108-residue extension region. Asn-397 carries N-linked (GlcNAc...) asparagine glycosylation.

This sequence belongs to the peptidase C1 family.

It is found in the lysosome. Its function is as follows. The cysteine proteinases have a potential role in host-parasite interaction and virulence. The protein is Cysteine proteinase of Trypanosoma brucei brucei.